Reading from the N-terminus, the 91-residue chain is Small ribosomal subunit protein uS19 (91 aa).

This sequence belongs to the universal ribosomal protein uS19 family.

Protein S19 forms a complex with S13 that binds strongly to the 16S ribosomal RNA. The polypeptide is Small ribosomal subunit protein uS19 (Sulfurimonas denitrificans (strain ATCC 33889 / DSM 1251) (Thiomicrospira denitrificans (strain ATCC 33889 / DSM 1251))).